We begin with the raw amino-acid sequence, 151 residues long: D-aminoacyl-tRNA deacylase (151 aa).

Positions 138–139 (GP) match the Gly-cisPro motif, important for rejection of L-amino acids motif.

It belongs to the DTD family. Homodimer.

It is found in the cytoplasm. It catalyses the reaction glycyl-tRNA(Ala) + H2O = tRNA(Ala) + glycine + H(+). It carries out the reaction a D-aminoacyl-tRNA + H2O = a tRNA + a D-alpha-amino acid + H(+). Its function is as follows. An aminoacyl-tRNA editing enzyme that deacylates mischarged D-aminoacyl-tRNAs. Also deacylates mischarged glycyl-tRNA(Ala), protecting cells against glycine mischarging by AlaRS. Acts via tRNA-based rather than protein-based catalysis; rejects L-amino acids rather than detecting D-amino acids in the active site. By recycling D-aminoacyl-tRNA to D-amino acids and free tRNA molecules, this enzyme counteracts the toxicity associated with the formation of D-aminoacyl-tRNA entities in vivo and helps enforce protein L-homochirality. This chain is D-aminoacyl-tRNA deacylase, found in Picosynechococcus sp. (strain ATCC 27264 / PCC 7002 / PR-6) (Agmenellum quadruplicatum).